A 511-amino-acid chain; its full sequence is DNA nucleotidylexotransferase (511 aa).

Positions 1 to 26 (MDPLQTAHAGPRKKRPRQTGASMAST) are disordered. Positions 11 to 17 (PRKKRPR) match the Nuclear localization signal motif. In terms of domain architecture, BRCT spans 27 to 124 (PQDVRFQDLV…KPVETTGKHQ (98 aa)). A Phosphoserine modification is found at serine 134. Residues 151-511 (SQYACQRRTT…DYIEPSERNA (361 aa)) are mediates interaction with DNTTIP2. Residues 258-262 (VGLKT) form an involved in DNA binding region. Residues 333-338 (GFRRGK) and 342-345 (HDVD) contribute to the a 2'-deoxyribonucleoside 5'-triphosphate site. 3 residues coordinate Mg(2+): aspartate 343, aspartate 345, and aspartate 435. Position 450 to 451 (450 to 451 (GW)) interacts with a 2'-deoxyribonucleoside 5'-triphosphate.

This sequence belongs to the DNA polymerase type-X family. As to quaternary structure, interacts with PRP19 and DNTTIP1. Forms a ternary complex with DNTTIP2 and core histone. Released from this complex by PCNA. Interacts with TRERF1. Mg(2+) serves as cofactor.

The protein localises to the nucleus. The enzyme catalyses DNA(n) + a 2'-deoxyribonucleoside 5'-triphosphate = DNA(n+1) + diphosphate. Functionally, template-independent DNA polymerase which catalyzes the random addition of deoxynucleoside 5'-triphosphate to the 3'-end of a DNA initiator. One of the in vivo functions of this enzyme is the addition of nucleotides at the junction (N region) of rearranged Ig heavy chain and T-cell receptor gene segments during the maturation of B- and T-cells. This is DNA nucleotidylexotransferase (DNTT) from Eulemur macaco (Black lemur).